The primary structure comprises 158 residues: Small ribosomal subunit protein uS9 (158 aa).

It belongs to the universal ribosomal protein uS9 family.

The polypeptide is Small ribosomal subunit protein uS9 (Nitrobacter hamburgensis (strain DSM 10229 / NCIMB 13809 / X14)).